A 356-amino-acid chain; its full sequence is Peptide chain release factor 1 (356 aa).

Glutamine 233 is subject to N5-methylglutamine.

The protein belongs to the prokaryotic/mitochondrial release factor family. Post-translationally, methylated by PrmC. Methylation increases the termination efficiency of RF1.

The protein resides in the cytoplasm. Its function is as follows. Peptide chain release factor 1 directs the termination of translation in response to the peptide chain termination codons UAG and UAA. This is Peptide chain release factor 1 from Bacillus licheniformis (strain ATCC 14580 / DSM 13 / JCM 2505 / CCUG 7422 / NBRC 12200 / NCIMB 9375 / NCTC 10341 / NRRL NRS-1264 / Gibson 46).